A 375-amino-acid chain; its full sequence is Alcohol dehydrogenase E chain (375 aa).

N-acetylserine is present on Ser-2. Residues Cys-47, Ser-49, His-68, Cys-98, Cys-101, Cys-104, Cys-112, and Cys-175 each contribute to the Zn(2+) site. 2 residues coordinate an alcohol: Ser-49 and His-68. Residue Ser-49 coordinates NAD(+). NAD(+)-binding positions include 200 to 205 (GLGGVG), Asp-224, Lys-229, Val-293, 293 to 295 (VGV), Phe-320, and Arg-370.

Belongs to the zinc-containing alcohol dehydrogenase family. Class-I subfamily. As to quaternary structure, dimer of identical or non-identical chains of two types (E and S) coded by 2 separate genes at different loci. Requires Zn(2+) as cofactor.

Its subcellular location is the cytoplasm. The catalysed reaction is a primary alcohol + NAD(+) = an aldehyde + NADH + H(+). The enzyme catalyses a secondary alcohol + NAD(+) = a ketone + NADH + H(+). The polypeptide is Alcohol dehydrogenase E chain (Equus caballus (Horse)).